Here is a 211-residue protein sequence, read N- to C-terminus: RNA chaperone ProQ (211 aa).

Residues 112-148 are disordered; it reads ERRAVEKANNPKANKKRSVHHSGNKSENKKSAGKKFS. Residues 124-134 show a composition bias toward basic residues; the sequence is ANKKRSVHHSG.

The protein belongs to the ProQ family.

Its subcellular location is the cytoplasm. RNA chaperone with significant RNA binding, RNA strand exchange and RNA duplexing activities. This Histophilus somni (strain 2336) (Haemophilus somnus) protein is RNA chaperone ProQ.